A 381-amino-acid chain; its full sequence is Magnesium transporter MRS2-I (381 aa).

The next 2 membrane-spanning stretches (helical) occupy residues 316 to 336 and 353 to 373; these read LFLS…GIFG and WVVL…VAYA. Residues 336-338 carry the Required for magnesium transport activity motif; sequence GMN.

It belongs to the CorA metal ion transporter (MIT) (TC 1.A.35.5) family.

The protein localises to the membrane. In terms of biological role, magnesium transporter that may mediate the influx of magnesium. The protein is Magnesium transporter MRS2-I (MRS2-I) of Oryza sativa subsp. indica (Rice).